The following is a 416-amino-acid chain: Lipoyl synthase, mitochondrial (416 aa).

A mitochondrion-targeting transit peptide spans 1–33 (MAAPTRSLRRLSSFRTTISPSLTVTAPIGCRSY). 7 residues coordinate [4Fe-4S] cluster: C132, C137, C143, C163, C167, C170, and S378. A Radical SAM core domain is found at 148–367 (DKSSATATIM…RQRALDMGFL (220 aa)). The disordered stretch occupies residues 396–416 (GSGTAERTVDQTAATTDEATR). Polar residues predominate over residues 405 to 416 (DQTAATTDEATR).

This sequence belongs to the radical SAM superfamily. Lipoyl synthase family. It depends on [4Fe-4S] cluster as a cofactor.

It localises to the mitochondrion. The catalysed reaction is [[Fe-S] cluster scaffold protein carrying a second [4Fe-4S](2+) cluster] + N(6)-octanoyl-L-lysyl-[protein] + 2 oxidized [2Fe-2S]-[ferredoxin] + 2 S-adenosyl-L-methionine + 4 H(+) = [[Fe-S] cluster scaffold protein] + N(6)-[(R)-dihydrolipoyl]-L-lysyl-[protein] + 4 Fe(3+) + 2 hydrogen sulfide + 2 5'-deoxyadenosine + 2 L-methionine + 2 reduced [2Fe-2S]-[ferredoxin]. The protein operates within protein modification; protein lipoylation via endogenous pathway; protein N(6)-(lipoyl)lysine from octanoyl-[acyl-carrier-protein]: step 2/2. In terms of biological role, catalyzes the radical-mediated insertion of two sulfur atoms into the C-6 and C-8 positions of the octanoyl moiety bound to the lipoyl domains of lipoate-dependent enzymes, thereby converting the octanoylated domains into lipoylated derivatives. This Penicillium rubens (strain ATCC 28089 / DSM 1075 / NRRL 1951 / Wisconsin 54-1255) (Penicillium chrysogenum) protein is Lipoyl synthase, mitochondrial.